The chain runs to 354 residues: Peptide chain release factor 1 (354 aa).

An N5-methylglutamine modification is found at Gln231. Residues 284–304 show a composition bias toward basic and acidic residues; sequence EALAKDRKEQVGSGDRSERIR. The interval 284 to 308 is disordered; sequence EALAKDRKEQVGSGDRSERIRTYNF.

The protein belongs to the prokaryotic/mitochondrial release factor family. In terms of processing, methylated by PrmC. Methylation increases the termination efficiency of RF1.

The protein localises to the cytoplasm. Functionally, peptide chain release factor 1 directs the termination of translation in response to the peptide chain termination codons UAG and UAA. The chain is Peptide chain release factor 1 from Nitratiruptor sp. (strain SB155-2).